A 289-amino-acid polypeptide reads, in one-letter code: Proteasome subunit beta (289 aa).

A propeptide spans 1–59 (removed in mature form; by autocatalysis); the sequence is MEHTPRNAGFALPAAYMSTMTSSFIDFLKAEAPDLLPRARVENMPAVPGGGSAFEPPHG. The active-site Nucleophile is Thr-60.

It belongs to the peptidase T1B family. The 20S proteasome core is composed of 14 alpha and 14 beta subunits that assemble into four stacked heptameric rings, resulting in a barrel-shaped structure. The two inner rings, each composed of seven catalytic beta subunits, are sandwiched by two outer rings, each composed of seven alpha subunits. The catalytic chamber with the active sites is on the inside of the barrel. Has a gated structure, the ends of the cylinder being occluded by the N-termini of the alpha-subunits. Is capped by the proteasome-associated ATPase, ARC.

The protein localises to the cytoplasm. The enzyme catalyses Cleavage of peptide bonds with very broad specificity.. It functions in the pathway protein degradation; proteasomal Pup-dependent pathway. The formation of the proteasomal ATPase ARC-20S proteasome complex, likely via the docking of the C-termini of ARC into the intersubunit pockets in the alpha-rings, may trigger opening of the gate for substrate entry. Interconversion between the open-gate and close-gate conformations leads to a dynamic regulation of the 20S proteasome proteolysis activity. Component of the proteasome core, a large protease complex with broad specificity involved in protein degradation. This chain is Proteasome subunit beta, found in Saccharomonospora viridis (strain ATCC 15386 / DSM 43017 / JCM 3036 / CCUG 5913 / NBRC 12207 / NCIMB 9602 / P101) (Thermoactinomyces viridis).